A 267-amino-acid chain; its full sequence is Large ribosomal subunit protein uL4 (267 aa).

This sequence belongs to the universal ribosomal protein uL4 family. As to quaternary structure, part of the 50S ribosomal subunit.

One of the primary rRNA binding proteins, this protein initially binds near the 5'-end of the 23S rRNA. It is important during the early stages of 50S assembly. It makes multiple contacts with different domains of the 23S rRNA in the assembled 50S subunit and ribosome. Functionally, forms part of the polypeptide exit tunnel. This Saccharolobus islandicus (strain M.16.27) (Sulfolobus islandicus) protein is Large ribosomal subunit protein uL4.